The primary structure comprises 647 residues: Sodium/nucleoside cotransporter 1 (647 aa).

At 1 to 79 the chain is on the cytoplasmic side; it reads MEDNTPRQRD…VRRFCREHTQ (79 aa). The disordered stretch occupies residues 34–58; it reads EGRAPGSDSSPAEVGGGWSKAGPEH. The chain crosses the membrane as a helical span at residues 80 to 103; that stretch reads LFRWICTGLLCTAFAAFLLIACLL. Residues 104–108 are Extracellular-facing; sequence DFQRA. The chain crosses the membrane as a helical span at residues 109–127; sequence LALFVLFCVVLFFLAHSLL. The Cytoplasmic portion of the chain corresponds to 128-146; that stretch reads KRLLGPKLLRCVKPLRHPC. Residues 147-166 traverse the membrane as a helical segment; the sequence is LNLWFKRGLALAAFLGLVLW. At 167 to 177 the chain is on the extracellular side; it reads LVLDTAQRPEQ. Residues 178–194 traverse the membrane as a helical segment; that stretch reads LVSFGGICVFILLLFAG. Topologically, residues 195–200 are cytoplasmic; the sequence is SKHHRA. The chain crosses the membrane as a helical span at residues 201–221; the sequence is VSWRAVSWGLGLQFALGLFVI. The Extracellular segment spans residues 222–260; that stretch reads RTEPGFIAFQWLGDQIQIFLSYTEAGSSFVFGEALVKDV. A helical membrane pass occupies residues 261 to 282; it reads FAFQVLPIIVFFSCAMSVLYYV. The Cytoplasmic segment spans residues 283–293; that stretch reads GLMQWVILKIS. Residues 294–317 form a helical membrane-spanning segment; sequence WLMQATMGTTATETLSVAGNIFVS. The Extracellular segment spans residues 318–336; that stretch reads QTEAPLLIRPYLADMTLSE. Residues 337–359 form a helical membrane-spanning segment; the sequence is IHVVMTGGYATIAGSLLGAYISF. At 360–365 the chain is on the cytoplasmic side; that stretch reads GIDAAS. A helical transmembrane segment spans residues 366 to 385; it reads LIAASVMAAPCALALSKLVY. Topologically, residues 386–422 are extracellular; sequence PEVEESKFKREEGVKLTYGDAQNLLEAASSGAAMSVR. The chain crosses the membrane as a helical span at residues 423–445; sequence VVTNIAANLIAFLAVLAFINAAL. Over 446–456 the chain is Cytoplasmic; it reads SWLGDMVDVQG. The chain crosses the membrane as a helical span at residues 457–478; sequence LSFQLICSYVLRPVAFLMGVAW. The Extracellular segment spans residues 479 to 533; sequence EDCPVVAELLGMKLFLNEFVAYQELSGYKQRRLAGAEEWVGSRKQWISVRAEILT. Residues 534-557 traverse the membrane as a helical segment; it reads TYALCGFANFSSIGIMLGGLTSMV. The Cytoplasmic portion of the chain corresponds to 558–568; it reads PQRKGDFSQIV. The chain crosses the membrane as a helical span at residues 569–591; it reads LRALCTGACVSLVNACVAGILYV. The Extracellular segment spans residues 592–647; that stretch reads PRGAEVDCVSFLNTTLSSSSFEVYQCCRQFFQSTSLEFSPEALDNCCRFYNHTICV. N-linked (GlcNAc...) asparagine glycosylation is found at asparagine 604 and asparagine 642.

It belongs to the concentrative nucleoside transporter (CNT) (TC 2.A.41) family. N-glycosylated. N-glycosylation is required for localization to the plasma membrane and the transporter activity.

The protein localises to the cell membrane. Its subcellular location is the apical cell membrane. The enzyme catalyses uridine(out) + Na(+)(out) = uridine(in) + Na(+)(in). It carries out the reaction thymidine(out) + Na(+)(out) = thymidine(in) + Na(+)(in). The catalysed reaction is cytidine(out) + Na(+)(out) = cytidine(in) + Na(+)(in). It catalyses the reaction adenosine(out) + Na(+)(out) = adenosine(in) + Na(+)(in). With respect to regulation, due to its high apparent affinity but slow transport, adenosine could act as a negative regulator of pyrimidine transport under some conditions. Functionally, sodium and pyrimidine nucleoside symporter of the plasma membrane that imports uridine, thymidine and cytidine into cells by coupling their transport to the transmembrane sodium electrochemical gradient. Also transports adenosine, an atypical substrate transported with high apparent affinity, but low maximum velocity. Therefore, exhibits the transport characteristics of the nucleoside transport system cit or N2 subtype (N2/cit). Involved in renal nucleoside (re)absorption. The sequence is that of Sodium/nucleoside cotransporter 1 (SLC28A1) from Sus scrofa (Pig).